The sequence spans 447 residues: Phosphoglucosamine mutase (447 aa).

S104 (phosphoserine intermediate) is an active-site residue. Mg(2+)-binding residues include S104, D243, D245, and D247. At S104 the chain carries Phosphoserine.

The protein belongs to the phosphohexose mutase family. It depends on Mg(2+) as a cofactor. In terms of processing, activated by phosphorylation.

It carries out the reaction alpha-D-glucosamine 1-phosphate = D-glucosamine 6-phosphate. Catalyzes the conversion of glucosamine-6-phosphate to glucosamine-1-phosphate. The polypeptide is Phosphoglucosamine mutase (Corynebacterium jeikeium (strain K411)).